An 87-amino-acid polypeptide reads, in one-letter code: UPF0335 protein Meso_3367 (87 aa).

This sequence belongs to the UPF0335 family.

This chain is UPF0335 protein Meso_3367, found in Chelativorans sp. (strain BNC1).